Consider the following 626-residue polypeptide: Lysine--tRNA ligase, cytoplasmic (626 aa).

Methionine 1 carries the N-acetylmethionine modification. Composition is skewed to polar residues over residues 1–11 (MEGAADQTTKA) and 18–27 (DSSTTLNAAE). The interval 1–84 (MEGAADQTTK…QKAVAADDEE (84 aa)) is disordered. Residues 37–69 (RSKNALKKEQKMKQKEEEKRRKDEEKAEKAKQA) adopt a coiled-coil conformation. Over residues 42–67 (LKKEQKMKQKEEEKRRKDEEKAEKAK) the composition is skewed to basic and acidic residues. Positions 69-78 (APKASSQKAV) are enriched in low complexity. A DNA-binding region (OB) is located at residues 141-217 (SLAGRIMSKR…RGELSIFPRS (77 aa)). Residues glycine 313 and glutamate 337 each coordinate substrate. ATP-binding positions include 359-361 (RNE) and 367-368 (HN). Residues glutamate 375 and tyrosine 377 each contribute to the substrate site. Ca(2+) is bound by residues glutamate 521 and glutamate 528. Position 528–529 (528–529 (EL)) interacts with ATP. The substrate site is built by asparagine 531 and glutamate 535. 584 to 587 (GIDR) is an ATP binding site.

This sequence belongs to the class-II aminoacyl-tRNA synthetase family. It depends on Ca(2+) as a cofactor.

Its subcellular location is the cytoplasm. It localises to the cytosol. The enzyme catalyses tRNA(Lys) + L-lysine + ATP = L-lysyl-tRNA(Lys) + AMP + diphosphate. In terms of biological role, catalyzes the specific attachment of an amino acid to its cognate tRNA in a 2 step reaction: the amino acid (AA) is first activated by ATP to form AA-AMP and then transferred to the acceptor end of the tRNA. Promotes aminoacylation of non-cognate tRNAs and translational recoding of lysine at nonsense codons. The polypeptide is Lysine--tRNA ligase, cytoplasmic (Arabidopsis thaliana (Mouse-ear cress)).